Here is a 558-residue protein sequence, read N- to C-terminus: Urocanate hydratase (558 aa).

NAD(+) is bound by residues 54–55, glutamine 132, 178–180, glutamate 198, 244–245, 265–269, 275–276, and tyrosine 324; these read GG, GMG, NA, QTSAH, and YL. Residue cysteine 412 is part of the active site. Glycine 494 is an NAD(+) binding site.

The protein belongs to the urocanase family. Requires NAD(+) as cofactor.

The protein resides in the cytoplasm. The enzyme catalyses 4-imidazolone-5-propanoate = trans-urocanate + H2O. It participates in amino-acid degradation; L-histidine degradation into L-glutamate; N-formimidoyl-L-glutamate from L-histidine: step 2/3. Its function is as follows. Catalyzes the conversion of urocanate to 4-imidazolone-5-propionate. The polypeptide is Urocanate hydratase (Acinetobacter baumannii (strain SDF)).